Consider the following 416-residue polypeptide: ORC1-type DNA replication protein 9 (416 aa).

ATP-binding positions include 79–83 (SGKSL), Y226, and R238.

This sequence belongs to the CDC6/cdc18 family.

Involved in regulation of DNA replication. This is ORC1-type DNA replication protein 9 (cdc6i) from Haloarcula marismortui (strain ATCC 43049 / DSM 3752 / JCM 8966 / VKM B-1809) (Halobacterium marismortui).